We begin with the raw amino-acid sequence, 230 residues long: CRP-like protein Clp (230 aa).

18–139 (PSLALDAGTI…APKILYAIGV (122 aa)) serves as a coordination point for a nucleoside 3',5'-cyclic phosphate. The HTH crp-type domain maps to 158–230 (LDVTDRIVRT…GKTVVLYGTR (73 aa)). A DNA-binding region (H-T-H motif) is located at residues 190-209 (RQELARLVGCSREMAGRVLK).

As to quaternary structure, homodimer.

The protein localises to the cytoplasm. Its activity is regulated as follows. Allosterically inhibited by cyclic di-GMP (c-di-GMP), which binds to Clp and abolishes its ability to bind its target gene promoter. In terms of biological role, global transcriptional regulator that regulates virulence factors production by activating or repressing the expression of a large set of genes in diffusible signal factor (DSF) pathway. The polypeptide is CRP-like protein Clp (clp) (Xanthomonas axonopodis pv. citri (strain 306)).